The primary structure comprises 200 residues: dITP/XTP pyrophosphatase (200 aa).

7–12 (TQNKRK) serves as a coordination point for substrate. Residues Glu42 and Asp71 each coordinate Mg(2+). Residue Asp71 is the Proton acceptor of the active site. Residues Ser72, 156–159 (FGYD), Lys179, and 184–185 (HR) each bind substrate.

This sequence belongs to the HAM1 NTPase family. Homodimer. It depends on Mg(2+) as a cofactor.

It carries out the reaction XTP + H2O = XMP + diphosphate + H(+). It catalyses the reaction dITP + H2O = dIMP + diphosphate + H(+). The enzyme catalyses ITP + H2O = IMP + diphosphate + H(+). Its function is as follows. Pyrophosphatase that catalyzes the hydrolysis of nucleoside triphosphates to their monophosphate derivatives, with a high preference for the non-canonical purine nucleotides XTP (xanthosine triphosphate), dITP (deoxyinosine triphosphate) and ITP. Seems to function as a house-cleaning enzyme that removes non-canonical purine nucleotides from the nucleotide pool, thus preventing their incorporation into DNA/RNA and avoiding chromosomal lesions. This is dITP/XTP pyrophosphatase from Malacoplasma penetrans (strain HF-2) (Mycoplasma penetrans).